A 258-amino-acid polypeptide reads, in one-letter code: Small ribosomal subunit protein mS40 (258 aa).

The transit peptide at 1–35 (MAASVLNTVLRRLPMLSLFRGSHRVQVPLQTLCTK) directs the protein to the mitochondrion. Phosphoserine is present on residues Ser38 and Ser49. The tract at residues 214–258 (SRLRRLYQGHLQEESGPPPESMPKMPPRTPAEASSTGQTGPQSAL) is disordered. Pro residues predominate over residues 229 to 242 (GPPPESMPKMPPRT). Residues 245–258 (EASSTGQTGPQSAL) are compositionally biased toward polar residues.

Belongs to the bacterial ribosomal protein bS18 family. Mitochondrion-specific ribosomal protein mS40 subfamily. Component of the mitochondrial small ribosomal subunit (mt-SSU). Mature mammalian 55S mitochondrial ribosomes consist of a small (28S) and a large (39S) subunit. The 28S small subunit contains a 12S ribosomal RNA (12S mt-rRNA) and 30 different proteins. The 39S large subunit contains a 16S rRNA (16S mt-rRNA), a copy of mitochondrial valine transfer RNA (mt-tRNA(Val)), which plays an integral structural role, and 52 different proteins. mS40 has a zinc binding site.

It is found in the mitochondrion. The chain is Small ribosomal subunit protein mS40 (MRPS18B) from Homo sapiens (Human).